The chain runs to 203 residues: RNA annealing protein YRA2 (203 aa).

Methionine 1 is subject to N-acetylmethionine. 2 disordered regions span residues 1 to 60 (MDKA…REEP) and 137 to 203 (QPQR…YMKG). Positions 11–20 (NSHTDSSSNH) are enriched in polar residues. The span at 47–60 (SRSKDRLYREREEP) shows a compositional bias: basic and acidic residues. The RRM domain occupies 64 to 138 (KRIRISKIPL…AKIEVEIYQP (75 aa)). Composition is skewed to basic residues over residues 139–153 (QRKHSRMNAHNRRKQ) and 163–180 (PGSHYRQRPNRVSKKNKG).

Belongs to the YRA1 family. Associates with mRNPs. Interacts with YRA1.

It is found in the nucleus. In terms of biological role, involved in export of poly(A) mRNAs from the nucleus. Recruited to the coding sequences as well as poly-A sites of active genes. The sequence is that of RNA annealing protein YRA2 (YRA2) from Saccharomyces cerevisiae (strain Lalvin EC1118 / Prise de mousse) (Baker's yeast).